The primary structure comprises 313 residues: 3-O-acetylpapaveroxine carboxylesterase CXE2 (313 aa).

The Involved in the stabilization of the negatively charged intermediate by the formation of the oxyanion hole motif lies at 72 to 74 (HGG). Active-site residues include Ser-158, Asp-262, and His-292.

Belongs to the 'GDXG' lipolytic enzyme family.

It catalyses the reaction 3-O-acetylpapaveroxine + H2O = narcotine hemiacetal + acetate + H(+). Its pathway is alkaloid biosynthesis. Its function is as follows. Carboxylesterase involved in the biosynthesis of the benzylisoquinoline alkaloid noscapine. Converts 3-O-acetylpapaveroxine to narcotine hemiacetal. The sequence is that of 3-O-acetylpapaveroxine carboxylesterase CXE2 from Papaver somniferum (Opium poppy).